The primary structure comprises 87 residues: Co-chaperonin GroES (87 aa).

The protein belongs to the GroES chaperonin family. In terms of assembly, heptamer of 7 subunits arranged in a ring. Interacts with the chaperonin GroEL.

Its subcellular location is the cytoplasm. Functionally, together with the chaperonin GroEL, plays an essential role in assisting protein folding. The GroEL-GroES system forms a nano-cage that allows encapsulation of the non-native substrate proteins and provides a physical environment optimized to promote and accelerate protein folding. GroES binds to the apical surface of the GroEL ring, thereby capping the opening of the GroEL channel. This Campylobacter hominis (strain ATCC BAA-381 / DSM 21671 / CCUG 45161 / LMG 19568 / NCTC 13146 / CH001A) protein is Co-chaperonin GroES.